Reading from the N-terminus, the 470-residue chain is Cysteine--tRNA ligase 1 (470 aa).

A Zn(2+)-binding site is contributed by C29. The short motif at 31-41 is the 'HIGH' region element; sequence PTVYDDAHIGN. C221, H246, and E250 together coordinate Zn(2+). Positions 279 to 283 match the 'KMSKS' region motif; it reads KMSKS. K282 is an ATP binding site.

It belongs to the class-I aminoacyl-tRNA synthetase family. As to quaternary structure, monomer. Zn(2+) is required as a cofactor.

The protein localises to the cytoplasm. The enzyme catalyses tRNA(Cys) + L-cysteine + ATP = L-cysteinyl-tRNA(Cys) + AMP + diphosphate. This Burkholderia lata (strain ATCC 17760 / DSM 23089 / LMG 22485 / NCIMB 9086 / R18194 / 383) protein is Cysteine--tRNA ligase 1.